The primary structure comprises 335 residues: Dihydroorotate dehydrogenase (quinone) (335 aa).

FMN contacts are provided by residues 61–65 and T85; that span reads AGLDK. Position 65 (K65) interacts with substrate. 110 to 114 lines the substrate pocket; sequence NRMGF. Residues N138 and N171 each contribute to the FMN site. Residue N171 coordinates substrate. Catalysis depends on S174, which acts as the Nucleophile. N176 provides a ligand contact to substrate. 2 residues coordinate FMN: K216 and T244. 245-246 is a binding site for substrate; the sequence is NT. Residues G267, G296, and 317–318 each bind FMN; that span reads YS.

It belongs to the dihydroorotate dehydrogenase family. Type 2 subfamily. As to quaternary structure, monomer. The cofactor is FMN.

The protein localises to the cell membrane. It catalyses the reaction (S)-dihydroorotate + a quinone = orotate + a quinol. It functions in the pathway pyrimidine metabolism; UMP biosynthesis via de novo pathway; orotate from (S)-dihydroorotate (quinone route): step 1/1. In terms of biological role, catalyzes the conversion of dihydroorotate to orotate with quinone as electron acceptor. In Pseudoalteromonas atlantica (strain T6c / ATCC BAA-1087), this protein is Dihydroorotate dehydrogenase (quinone).